The chain runs to 214 residues: Pyridoxine/pyridoxamine 5'-phosphate oxidase (214 aa).

Residues 8–11 (RLSY) and Arg66 contribute to the substrate site. FMN is bound by residues 61-66 (RTVLLR), 76-77 (FT), Lys83, and Gln105. 3 residues coordinate substrate: Tyr123, Arg127, and Ser131. The interval 126 to 146 (SRPRESQLAAHASDPQSAPVS) is disordered. FMN is bound by residues 141-142 (QS) and Trp187. Substrate is bound at residue 193 to 195 (RMH). Residue Arg197 participates in FMN binding.

The protein belongs to the pyridoxamine 5'-phosphate oxidase family. Homodimer. FMN is required as a cofactor.

The enzyme catalyses pyridoxamine 5'-phosphate + O2 + H2O = pyridoxal 5'-phosphate + H2O2 + NH4(+). The catalysed reaction is pyridoxine 5'-phosphate + O2 = pyridoxal 5'-phosphate + H2O2. Its pathway is cofactor metabolism; pyridoxal 5'-phosphate salvage; pyridoxal 5'-phosphate from pyridoxamine 5'-phosphate: step 1/1. It functions in the pathway cofactor metabolism; pyridoxal 5'-phosphate salvage; pyridoxal 5'-phosphate from pyridoxine 5'-phosphate: step 1/1. In terms of biological role, catalyzes the oxidation of either pyridoxine 5'-phosphate (PNP) or pyridoxamine 5'-phosphate (PMP) into pyridoxal 5'-phosphate (PLP). This chain is Pyridoxine/pyridoxamine 5'-phosphate oxidase, found in Deinococcus deserti (strain DSM 17065 / CIP 109153 / LMG 22923 / VCD115).